Consider the following 418-residue polypeptide: Hepatic and glial cell adhesion molecule (418 aa).

An N-terminal signal peptide occupies residues 1 to 33 (MKREREAPSRAFSALRLAPFVYLLLIQTEPLEG). The Ig-like V-type domain occupies 34–141 (VNITSPVRLI…TGEKTINLTV (108 aa)). Residues 34 to 240 (VNITSPVRLI…VKITVYRRSS (207 aa)) lie on the Extracellular side of the membrane. N-linked (GlcNAc...) asparagine glycosylation is found at N35, N138, N167, and N189. An Ig-like C2-type domain is found at 148–234 (PQVLVASTTV…QGRSPPVKIT (87 aa)). C168 and C217 are disulfide-bonded. Residues 241-261 (LYIILSTGGIFLLVTLVTVCA) traverse the membrane as a helical segment. At 262–418 (CWKPSKKSGK…DEAGPVEISA (157 aa)) the chain is on the cytoplasmic side. The segment at 271-418 (KKRKLEKQNS…DEAGPVEISA (148 aa)) is disordered. S280 bears the Phosphoserine mark. Positions 287-308 (SDDRLKPEADTLPRSGEQERKN) are enriched in basic and acidic residues. Phosphoserine is present on residues S352 and S379. Low complexity predominate over residues 385 to 400 (GSPGRSRSASRTLRTA).

In terms of assembly, homodimer. Dimer formation occurs predominantly through cis interactions on the cell surface. Part of a complex containing MLC1, TRPV4, AQP4 and ATP1B1. Interacts with CLCN2. Post-translationally, N-glycosylated.

The protein resides in the cytoplasm. It localises to the cell membrane. Involved in regulating cell motility and cell-matrix interactions. May inhibit cell growth through suppression of cell proliferation. In glia, associates and targets CLCN2 at astrocytic processes and myelinated fiber tracts where it may regulate transcellular chloride flux involved in neuron excitability. This chain is Hepatic and glial cell adhesion molecule, found in Bos taurus (Bovine).